A 252-amino-acid chain; its full sequence is Protein IRON-RELATED TRANSCRIPTION FACTOR 3 (252 aa).

The interval 36–49 (PRKVHKSEREKLKR) is basic motif. The bHLH domain occupies 36-86 (PRKVHKSEREKLKRGHLNDLFGELGNMLEADRQSNGKACILTDTTRILRDL). A helix-loop-helix motif region spans residues 50-86 (GHLNDLFGELGNMLEADRQSNGKACILTDTTRILRDL). Residues 76–131 (LTDTTRILRDLLSQVKSLRQENSTLQNESNYVTMERNELQDENGALRSEISDLQNE) are a coiled coil. The disordered stretch occupies residues 135–252 (RATGSPGWGH…GLPRMEDEQM (118 aa)). A compositionally biased stretch (low complexity) spans 162 to 176 (PSQQPMQPSPMTTST). Over residues 208 to 219 (PAEDPEPSEDQE) the composition is skewed to acidic residues.

Belongs to the bHLH protein family.

The protein resides in the nucleus. Functionally, transcription factor that acts as a negative regulator of the iron deficiency response. Suppresses the induction of iron deficiency responsive genes, such as NAS1, NAS2, IRO2, IRT1, YSL15, and NRAMP1. This chain is Protein IRON-RELATED TRANSCRIPTION FACTOR 3, found in Oryza sativa subsp. japonica (Rice).